The following is a 280-amino-acid chain: MTFRAASDQIEVPAGVGLTAVGMAWVRARESARRDRLFDDPYAEAFVEAAGGPAAAGPAGAFARFIDVVDSHGVQRTRFFDDYLTRAADAGQRQFVLLAAGLDTRAHRLSWPAGTRLFEVDLPEMLTFKQAVLDTRHATARAERITVPADLAGDWSSALTRAGLRPRERTTWLVEGLLPYLDAEAAAHLLTTVGELSVPGSLLGFEYQADTWLLDELRATPELAEFATLLKGGLGESPLDWLPRHGWQVLQARLRSELAAEAGRPAPGPLADGFLVATRR.

S-adenosyl-L-methionine-binding positions include Asp-121 and Asp-150–Leu-151.

The protein belongs to the UPF0677 family.

In terms of biological role, exhibits S-adenosyl-L-methionine-dependent methyltransferase activity. This chain is Putative S-adenosyl-L-methionine-dependent methyltransferase FRAAL3836, found in Frankia alni (strain DSM 45986 / CECT 9034 / ACN14a).